Here is a 476-residue protein sequence, read N- to C-terminus: Glycogen synthase (476 aa).

Residue Lys15 coordinates ADP-alpha-D-glucose.

This sequence belongs to the glycosyltransferase 1 family. Bacterial/plant glycogen synthase subfamily.

The enzyme catalyses [(1-&gt;4)-alpha-D-glucosyl](n) + ADP-alpha-D-glucose = [(1-&gt;4)-alpha-D-glucosyl](n+1) + ADP + H(+). Its pathway is glycan biosynthesis; glycogen biosynthesis. In terms of biological role, synthesizes alpha-1,4-glucan chains using ADP-glucose. The chain is Glycogen synthase from Yersinia pestis bv. Antiqua (strain Antiqua).